The following is a 95-amino-acid chain: Large ribosomal subunit protein uL23 (95 aa).

The protein belongs to the universal ribosomal protein uL23 family. Part of the 50S ribosomal subunit. Contacts protein L29, and trigger factor when it is bound to the ribosome.

Its function is as follows. One of the early assembly proteins it binds 23S rRNA. One of the proteins that surrounds the polypeptide exit tunnel on the outside of the ribosome. Forms the main docking site for trigger factor binding to the ribosome. The sequence is that of Large ribosomal subunit protein uL23 from Desulforamulus reducens (strain ATCC BAA-1160 / DSM 100696 / MI-1) (Desulfotomaculum reducens).